The primary structure comprises 272 residues: Ethanolamine ammonia-lyase small subunit (272 aa).

Adenosylcob(III)alamin-binding residues include V161, E182, and C211.

It belongs to the EutC family. As to quaternary structure, the basic unit is a heterodimer which dimerizes to form tetramers. The heterotetramers trimerize; 6 large subunits form a core ring with 6 small subunits projecting outwards. Requires adenosylcob(III)alamin as cofactor.

The protein resides in the bacterial microcompartment. It catalyses the reaction ethanolamine = acetaldehyde + NH4(+). The protein operates within amine and polyamine degradation; ethanolamine degradation. Its function is as follows. Catalyzes the deamination of various vicinal amino-alcohols to oxo compounds. Allows this organism to utilize ethanolamine as the sole source of nitrogen and carbon in the presence of external vitamin B12. This is Ethanolamine ammonia-lyase small subunit from Pseudomonas putida (strain ATCC 700007 / DSM 6899 / JCM 31910 / BCRC 17059 / LMG 24140 / F1).